Consider the following 294-residue polypeptide: 4-hydroxy-tetrahydrodipicolinate synthase (294 aa).

Residue Thr-45 coordinates pyruvate. Tyr-133 functions as the Proton donor/acceptor in the catalytic mechanism. The active-site Schiff-base intermediate with substrate is Lys-161. Residue Ile-203 participates in pyruvate binding.

Belongs to the DapA family. As to quaternary structure, homotetramer; dimer of dimers.

Its subcellular location is the cytoplasm. The enzyme catalyses L-aspartate 4-semialdehyde + pyruvate = (2S,4S)-4-hydroxy-2,3,4,5-tetrahydrodipicolinate + H2O + H(+). The protein operates within amino-acid biosynthesis; L-lysine biosynthesis via DAP pathway; (S)-tetrahydrodipicolinate from L-aspartate: step 3/4. Catalyzes the condensation of (S)-aspartate-beta-semialdehyde [(S)-ASA] and pyruvate to 4-hydroxy-tetrahydrodipicolinate (HTPA). The protein is 4-hydroxy-tetrahydrodipicolinate synthase of Shewanella sp. (strain W3-18-1).